A 121-amino-acid polypeptide reads, in one-letter code: UPF0102 protein DSY2577 (121 aa).

Belongs to the UPF0102 family.

This Desulfitobacterium hafniense (strain Y51) protein is UPF0102 protein DSY2577.